The primary structure comprises 374 residues: N5-carboxyaminoimidazole ribonucleotide synthase (374 aa).

Residues Arg108, Lys148, 153-159 (GYDGKGQ), 183-186 (EKYL), Glu191, His214, and 266-267 (NE) contribute to the ATP site. Residues 112 to 296 (KETLKSAGTK…QFDTHILAVT (185 aa)) form the ATP-grasp domain.

Belongs to the PurK/PurT family. As to quaternary structure, homodimer.

The enzyme catalyses 5-amino-1-(5-phospho-beta-D-ribosyl)imidazole + hydrogencarbonate + ATP = 5-carboxyamino-1-(5-phospho-D-ribosyl)imidazole + ADP + phosphate + 2 H(+). The protein operates within purine metabolism; IMP biosynthesis via de novo pathway; 5-amino-1-(5-phospho-D-ribosyl)imidazole-4-carboxylate from 5-amino-1-(5-phospho-D-ribosyl)imidazole (N5-CAIR route): step 1/2. Functionally, catalyzes the ATP-dependent conversion of 5-aminoimidazole ribonucleotide (AIR) and HCO(3)(-) to N5-carboxyaminoimidazole ribonucleotide (N5-CAIR). This chain is N5-carboxyaminoimidazole ribonucleotide synthase, found in Staphylococcus aureus (strain MRSA252).